The following is a 288-amino-acid chain: 4-diphosphocytidyl-2-C-methyl-D-erythritol kinase (288 aa).

K8 is an active-site residue. 92–102 (PVAAGMAGGST) lines the ATP pocket. D134 is an active-site residue.

It belongs to the GHMP kinase family. IspE subfamily.

It carries out the reaction 4-CDP-2-C-methyl-D-erythritol + ATP = 4-CDP-2-C-methyl-D-erythritol 2-phosphate + ADP + H(+). The protein operates within isoprenoid biosynthesis; isopentenyl diphosphate biosynthesis via DXP pathway; isopentenyl diphosphate from 1-deoxy-D-xylulose 5-phosphate: step 3/6. In terms of biological role, catalyzes the phosphorylation of the position 2 hydroxy group of 4-diphosphocytidyl-2C-methyl-D-erythritol. In Clostridium perfringens (strain ATCC 13124 / DSM 756 / JCM 1290 / NCIMB 6125 / NCTC 8237 / Type A), this protein is 4-diphosphocytidyl-2-C-methyl-D-erythritol kinase.